Here is a 601-residue protein sequence, read N- to C-terminus: DDB1- and CUL4-associated factor 8 (601 aa).

Polar residues-rich tracts occupy residues 1–24 and 46–60; these read MSFSGEMSNGKTDVTNGGFSSSPE and VSLSLTADETGTTQA. The interval 1-150 is disordered; it reads MSFSGEMSNG…DWLISEKTPL (150 aa). The Nuclear export signal motif lies at 39–50; that stretch reads IEVEASDVSLSL. Residues 61-99 show a composition bias toward basic and acidic residues; that stretch reads ESRDSCSETSGEDKDSDSMDDTGHYSINDENRGNDQSHS. The stretch at 94 to 131 forms a coiled coil; sequence NDQSHSEDEEEEEEEDEEEEAVRHRKRAQRKRANRDQE. Residues 100–113 show a composition bias toward acidic residues; the sequence is EDEEEEEEEDEEEE. Basic residues predominate over residues 116–126; it reads RHRKRAQRKRA. A compositionally biased stretch (basic and acidic residues) spans 127-140; sequence NRDQESSDEERALD. WD repeat units lie at residues 194 to 233, 237 to 278, 284 to 324, 332 to 372, 388 to 427, 435 to 475, and 479 to 519; these read GHSGCVNTLHFNQRGTCLASGSDDLKVVVWDWVRRKPVLE, GHKS…CCKN, QHKG…PASR, ESKV…ENVN, EAKANITCLVYSHDGSELLASYNDEDIYLFNSSHSDGAEY, RNNA…IVQF, and DKGG…TELD. The tract at residues 561–601 is disordered; the sequence is RRRRRDAGLGAGDAESDDSPSSSDSSDDDEDGPDRVQCIPS.

It belongs to the WD repeat DCAF8 family.

It localises to the nucleus. The protein resides in the cytoplasm. In Xenopus laevis (African clawed frog), this protein is DDB1- and CUL4-associated factor 8 (dcaf8).